The sequence spans 210 residues: MSAIDNYQDEEEDDIVCVNEEIETGHPRVTILHPPNERIVPPLNFCPVERYLYRSGQPSNVNFPFLLNLKLKTIIWLANEEPQDALLEFCDDHNIQLQFAAINPDGGEDDNPWDGLTEHSIRNALHTIVNSESYPLLVCCGMGRHRTGTVIGCLRRLMGWNLASVSEEYRRFTGSRGGRILVELLIEAFDITSVEIDREKAPNWLLTALS.

In terms of domain architecture, Tyrosine-protein phosphatase spans 44–204 (NFCPVERYLY…EIDREKAPNW (161 aa)). Cys140 serves as the catalytic Phosphocysteine intermediate.

Belongs to the protein-tyrosine phosphatase family.

The protein resides in the cytoplasm. The catalysed reaction is O-phospho-L-tyrosyl-[protein] + H2O = L-tyrosyl-[protein] + phosphate. Its function is as follows. Putative tyrosine-protein phosphatase required for protection against superoxide stress. The protein is Putative tyrosine-protein phosphatase OCA1 (OCA1) of Kluyveromyces lactis (strain ATCC 8585 / CBS 2359 / DSM 70799 / NBRC 1267 / NRRL Y-1140 / WM37) (Yeast).